Here is a 289-residue protein sequence, read N- to C-terminus: Protoheme IX farnesyltransferase 2 (289 aa).

The next 9 helical transmembrane spans lie at 4–24 (PGIIFGNLISVAGGFLLAAKG), 28–48 (LVLMLASLVGLSLVVASGCAI), 66–86 (RVTVTGEIAVGNVLAFGLALG), 99–118 (ALALLFAVIGYIVYVGVYSL), 124–144 (SVYGTLVGSFSGAVPPVVGYC), 155–175 (AILLLMFSLWQMPHSYAIAIF), 199–219 (LHIVLYIAVFALVSALLPLAG), 221–241 (TGIAFMAVTCATSLWWLAMAL), and 256–276 (QVFGFSIITITALSVTMALDF).

It belongs to the UbiA prenyltransferase family. Protoheme IX farnesyltransferase subfamily.

The protein localises to the cell inner membrane. The enzyme catalyses heme b + (2E,6E)-farnesyl diphosphate + H2O = Fe(II)-heme o + diphosphate. It functions in the pathway porphyrin-containing compound metabolism; heme O biosynthesis; heme O from protoheme: step 1/1. Converts heme B (protoheme IX) to heme O by substitution of the vinyl group on carbon 2 of heme B porphyrin ring with a hydroxyethyl farnesyl side group. The chain is Protoheme IX farnesyltransferase 2 from Shewanella baltica (strain OS195).